A 149-amino-acid chain; its full sequence is UPF0310 protein msl3206 (149 aa).

The protein belongs to the UPF0310 family.

The protein is UPF0310 protein msl3206 of Mesorhizobium japonicum (strain LMG 29417 / CECT 9101 / MAFF 303099) (Mesorhizobium loti (strain MAFF 303099)).